A 394-amino-acid polypeptide reads, in one-letter code: Elongation factor Tu (394 aa).

Positions 10–204 constitute a tr-type G domain; that stretch reads KPHVNVGTIG…ALDTYIPEPE (195 aa). Positions 19–26 are G1; it reads GHVDHGKT. 19–26 serves as a coordination point for GTP; it reads GHVDHGKT. Mg(2+) is bound at residue Thr-26. Residues 60 to 64 are G2; sequence GITIN. The tract at residues 81-84 is G3; that stretch reads DCPG. Residues 81 to 85 and 136 to 139 each bind GTP; these read DCPGH and NKCD. The interval 136-139 is G4; it reads NKCD. The tract at residues 174 to 176 is G5; sequence SAL.

This sequence belongs to the TRAFAC class translation factor GTPase superfamily. Classic translation factor GTPase family. EF-Tu/EF-1A subfamily. Monomer.

The protein localises to the cytoplasm. It carries out the reaction GTP + H2O = GDP + phosphate + H(+). Functionally, GTP hydrolase that promotes the GTP-dependent binding of aminoacyl-tRNA to the A-site of ribosomes during protein biosynthesis. The sequence is that of Elongation factor Tu from Shewanella halifaxensis (strain HAW-EB4).